A 228-amino-acid polypeptide reads, in one-letter code: 2,3-bisphosphoglycerate-dependent phosphoglycerate mutase (228 aa).

Residues 8–15 (RHGQSQWN), 21–22 (TG), Arg60, 87–90 (ERHY), Lys98, 114–115 (RR), and 180–181 (GN) contribute to the substrate site. Catalysis depends on His9, which acts as the Tele-phosphohistidine intermediate. Glu87 (proton donor/acceptor) is an active-site residue.

This sequence belongs to the phosphoglycerate mutase family. BPG-dependent PGAM subfamily. Homodimer.

The enzyme catalyses (2R)-2-phosphoglycerate = (2R)-3-phosphoglycerate. It participates in carbohydrate degradation; glycolysis; pyruvate from D-glyceraldehyde 3-phosphate: step 3/5. In terms of biological role, catalyzes the interconversion of 2-phosphoglycerate and 3-phosphoglycerate. In Erythrobacter litoralis (strain HTCC2594), this protein is 2,3-bisphosphoglycerate-dependent phosphoglycerate mutase.